A 213-amino-acid polypeptide reads, in one-letter code: Probable transaldolase (213 aa).

The active-site Schiff-base intermediate with substrate is the Lys-83.

The protein belongs to the transaldolase family. Type 3B subfamily.

It is found in the cytoplasm. It carries out the reaction D-sedoheptulose 7-phosphate + D-glyceraldehyde 3-phosphate = D-erythrose 4-phosphate + beta-D-fructose 6-phosphate. Its pathway is carbohydrate degradation; pentose phosphate pathway; D-glyceraldehyde 3-phosphate and beta-D-fructose 6-phosphate from D-ribose 5-phosphate and D-xylulose 5-phosphate (non-oxidative stage): step 2/3. Functionally, transaldolase is important for the balance of metabolites in the pentose-phosphate pathway. This is Probable transaldolase from Geobacillus sp. (strain WCH70).